Here is a 344-residue protein sequence, read N- to C-terminus: Heat-inducible transcription repressor HrcA (344 aa).

This sequence belongs to the HrcA family.

Functionally, negative regulator of class I heat shock genes (grpE-dnaK-dnaJ and groELS operons). Prevents heat-shock induction of these operons. This chain is Heat-inducible transcription repressor HrcA, found in Moorella thermoacetica (strain ATCC 39073 / JCM 9320).